Consider the following 1077-residue polypeptide: TSC22 domain family protein 1 (1077 aa).

Positions 1–98 are required for interaction with TGFBR1 and promotion of TGF-beta signaling; that stretch reads MHQPPESTAA…SQAQLQGQPL (98 aa). Disordered stretches follow at residues 22 to 112, 125 to 283, 458 to 492, 842 to 874, and 909 to 947; these read MAHP…SGFQ, ISSN…VPSS, QTPT…SVGS, SSAA…GSLV, and QAIG…SDGS. Residues 58–70 are compositionally biased toward pro residues; that stretch reads FPPPSLLQPPPPA. Residues 84–96 are compositionally biased toward low complexity; it reads SLNLLSQAQLQGQ. Over residues 133–142 the composition is skewed to acidic residues; the sequence is EDTESYDDLD. Over residues 216–240 the composition is skewed to basic residues; that stretch reads HPHHLHHHHHPHHGHHLHHGHHHSS. Position 263 is a phosphoserine (Ser-263). A compositionally biased stretch (low complexity) spans 471–489; sequence TSGSSVSSSVSTLSHYTES. Over residues 852–874 the composition is skewed to polar residues; sequence VPTNLVPPQNIAQPPATQNGSLV. Positions 933–947 are enriched in low complexity; that stretch reads MSGDSGGMSAVSDGS. The leucine-zipper stretch occupies residues 1010 to 1031; it reads LKEQIKELIEKNSQLEQENNLL. Positions 1042-1077 are disordered; the sequence is QFQAQLQTGSPPATTQPQGTTQPPAQPASQGSGSTA. The span at 1048-1077 shows a compositional bias: low complexity; sequence QTGSPPATTQPQGTTQPPAQPASQGSGSTA.

This sequence belongs to the TSC-22/Dip/Bun family. In terms of assembly, forms homodimers. Forms heterodimers. Component of a complex composed of TSC22D1 (via N-terminus), TGFBR1 and TGFBR2; the interaction between TSC22D1 and TGFBR1 is inhibited by SMAD7 and promoted by TGFB1. Interacts with SMAD7; the interaction requires TGF-beta and the interaction is inhibited by TGFBR1. Interacts with TPT1/fortilin; interaction results in the destabilization of TSC22D1 protein and prevents TSC22D1-mediated apoptosis. Interacts with SMAD4 (via N-terminus). Interacts with ACVRL1/ALK1, ACVR1/ALK2, BMPR1A/ALK3, ACVR1B/ALK4, BMPR1B/ALK6, ACVR2A/ACTRII, and BMPR2. Interacts with SMAD6. Interacts with TFE3; the interaction is enhanced in the presence of TGF-beta. Forms a heterodimer with TSC22D4/THG1. As to quaternary structure, forms a heterodimer with TSC22D4/THG1. Interacts with histone H1-2. Interacts with GNL3. As to expression, expressed in bone marrow cells (at protein level). Expressed in T-cells. Expressed in the brain. Expressed in the myoepithelial cells of the mammary gland ducts and alveoli, expression is consistent throughout pregnancy, lactation and involution (at protein level). Expressed in the cortex, medulla and papilla of the kidney. In terms of tissue distribution, expressed in the myoepithelial cells of the mammary gland, expression significantly increases in the secretory luminal epithelium of the mammary gland at the initiation of involution, with levels decreasing from day 3 of involution onwards (at protein level). Expressed in the cortex, medulla and papilla of the kidney.

It is found in the cytoplasm. It localises to the nucleus. The protein resides in the cell membrane. The protein localises to the mitochondrion. Functionally, transcriptional repressor. Acts on the C-type natriuretic peptide (CNP) promoter. Acts to promote CASP3-mediated apoptosis. Positively regulates TGF-beta signaling by interacting with SMAD7 which inhibits binding of SMAD7 to TGFBR1, preventing recruitment of SMURF ubiquitin ligases to TGFBR1 and inhibiting SMURF-mediated ubiquitination and degradation of TGFBR1. Contributes to enhancement of TGF-beta signaling by binding to and modulating the transcription activator activity of SMAD4. Promotes TGF-beta-induced transcription of COL1A2; via its interaction with TFE3 at E-boxes in the gene proximal promoter. Plays a role in the repression of hematopoietic precursor cell growth. Promotes IL2 deprivation-induced apoptosis in T-lymphocytes, via repression of TSC22D3/GILZ transcription and activation of the caspase cascade. Its function is as follows. May act to negatively regulate TGFB3 signaling and thereby inhibit cell death in mammary gland cells. Positively regulates cell death in response to TGFB3 during mammary gland involution. This chain is TSC22 domain family protein 1, found in Mus musculus (Mouse).